Here is a 233-residue protein sequence, read N- to C-terminus: MSVISMKQLLEAGVHFGHQTRRWNPKMAPYIFTERNGIYIIDLQKTVKKVEEAYNFLRSVAEEGKDVLFVGTKKQAQEAIEEEAKRSEMHFVNNRWLGGMLTNFTTITARINKLEELDKMEEDGTFEVLPKKEVIKLKNEREKLEKNLGGIRKLDANNVGAMFIVDPRKEKNAILEAKRLGIPVVAIVDTNCDPDEVDFVIPGNDDAIRAVRLIAAKMADAVLEGRQGEQLAE.

This sequence belongs to the universal ribosomal protein uS2 family.

The chain is Small ribosomal subunit protein uS2 from Clostridium botulinum (strain Hall / ATCC 3502 / NCTC 13319 / Type A).